Consider the following 166-residue polypeptide: S-phase kinase-associated protein 1 homolog (166 aa).

Residues 105-166 form an interaction with the F-box domain of F-box proteins region; it reads ILAANYLDIK…ENKWAEEATS (62 aa).

It belongs to the SKP1 family. In terms of assembly, component of multiple SCF (SKP1-CUL1-F-box) E3 ubiquitin-protein ligase complexes formed of CUL1, SKP1, RBX1 and a variable F-box domain-containing protein as substrate-specific subunit.

It functions in the pathway protein modification; protein ubiquitination. Essential component of the SCF (SKP1-CUL1-F-box protein) ubiquitin ligase complex, which mediates the ubiquitination of proteins involved in cell cycle progression, signal transduction and transcription. In the SCF complex, serves as an adapter that links the F-box protein to CUL1. The functional specificity of the SCF complex depends on the F-box protein as substrate recognition component. Its association with the holoenzyme telomerase ribonucleoprotein complex suggests that it may play a role in turnover of holoenzyme telomerase complex components. This Tetrahymena thermophila (strain SB210) protein is S-phase kinase-associated protein 1 homolog.